Here is a 90-residue protein sequence, read N- to C-terminus: Co-chaperonin GroES (90 aa).

The protein belongs to the GroES chaperonin family. As to quaternary structure, heptamer of 7 subunits arranged in a ring. Interacts with the chaperonin GroEL.

It localises to the cytoplasm. Together with the chaperonin GroEL, plays an essential role in assisting protein folding. The GroEL-GroES system forms a nano-cage that allows encapsulation of the non-native substrate proteins and provides a physical environment optimized to promote and accelerate protein folding. GroES binds to the apical surface of the GroEL ring, thereby capping the opening of the GroEL channel. The sequence is that of Co-chaperonin GroES from Bacteroides fragilis (strain ATCC 25285 / DSM 2151 / CCUG 4856 / JCM 11019 / LMG 10263 / NCTC 9343 / Onslow / VPI 2553 / EN-2).